The following is a 267-amino-acid chain: MKIIQVILKFIIIFIIPSIHAQECKLEFKTEKIHVNGVTYDQKVGDPITPIADAIKADNLEEVKKILDEGYGVNQPCLGWVPLDYAISNNNIKIADFLLKRDASMSLIHINIGFMKSEIAEFLINQGMSPNLRYEDGITGMMLAAERNNPDLIKLLLKLGVNPNVQNSKTGMTSLMYAASYLNVEVVRVLLEQGVDPNIKDFKGKRALNWIAVDANRKLHASDGEYYAALFLAPFETKQKIIKERNSIKTRNKEKEKEIKKLFNSHR.

ANK repeat units lie at residues Asp46–Gln75, Leu78–Leu107, Asp136–Val165, and Thr170–Ile199. Positions Lys238 to Ser265 form a coiled coil.

The sequence is that of Putative ankyrin repeat protein RF_1099 from Rickettsia felis (strain ATCC VR-1525 / URRWXCal2) (Rickettsia azadi).